Here is a 153-residue protein sequence, read N- to C-terminus: MKLNELYNNIGAKKNKKRIARGIGSGKGKTGGRGIKGQKSRSGVAIKGFEGGQTPMIKRLPKRGFNCISTKKYNIINIYNIEEALADGRLSAADTITKEKLVEVGVVNNKNNKKLVKLLSICSDDFASPLSLKLDAYSSKAKDLIEKAGGKLL.

The tract at residues 21–41 is disordered; that stretch reads RGIGSGKGKTGGRGIKGQKSR. Gly residues predominate over residues 23–35; sequence IGSGKGKTGGRGI.

Belongs to the universal ribosomal protein uL15 family. As to quaternary structure, part of the 50S ribosomal subunit.

In terms of biological role, binds to the 23S rRNA. This chain is Large ribosomal subunit protein uL15, found in Rickettsia felis (strain ATCC VR-1525 / URRWXCal2) (Rickettsia azadi).